Reading from the N-terminus, the 498-residue chain is UDP-N-acetylmuramate--L-alanine ligase (498 aa).

122–128 serves as a coordination point for ATP; the sequence is GTHGKTS.

Belongs to the MurCDEF family.

Its subcellular location is the cytoplasm. The catalysed reaction is UDP-N-acetyl-alpha-D-muramate + L-alanine + ATP = UDP-N-acetyl-alpha-D-muramoyl-L-alanine + ADP + phosphate + H(+). The protein operates within cell wall biogenesis; peptidoglycan biosynthesis. In terms of biological role, cell wall formation. This is UDP-N-acetylmuramate--L-alanine ligase from Corynebacterium jeikeium (strain K411).